Reading from the N-terminus, the 368-residue chain is MIRPCTFGIEEEYLLVNLGSGQVPATPSPAVMGRCREALGRYFAQEMFRSQIELASPVFTNLYEAREFLQRNRQRLRVALAEEGMGPYAAASHPCAAWLLQKPAAQGHYKQLFDDYRHVARRSLLNGLHVHVGVPPACDRMQLINRLLPWLPLLLALSTSSPLWAGQPTGYLSYRRVICGEWPHMGLPEALPDWAAYERYRALLQRTGALAADGDLWWALRPSRRYPTVELRICDGCPNLEDVLCIAALFRHLVEHSIAYRHDPLPCSRELRWIAQENYWRAMRHGRHAQFIGCHEQQPVTAQGWLAQLQAQIPIDSADAERACQHALHVLRHGTHADQQLRCLAQARADGLGKGQALRAVVAAGTCI.

Belongs to the glutamate--cysteine ligase type 2 family. YbdK subfamily.

It catalyses the reaction L-cysteine + L-glutamate + ATP = gamma-L-glutamyl-L-cysteine + ADP + phosphate + H(+). ATP-dependent carboxylate-amine ligase which exhibits weak glutamate--cysteine ligase activity. The chain is Putative glutamate--cysteine ligase 2 from Pseudomonas putida (strain ATCC 47054 / DSM 6125 / CFBP 8728 / NCIMB 11950 / KT2440).